We begin with the raw amino-acid sequence, 65 residues long: Large ribosomal subunit protein bL35 (65 aa).

Residues 1–52 form a disordered region; sequence MPKIKTNRGAAKRFKRTGSGGFKCVQSHRRHILTKKSTKRKRQLRSPDMVHP. Residues 26–44 are compositionally biased toward basic residues; that stretch reads QSHRRHILTKKSTKRKRQL.

The protein belongs to the bacterial ribosomal protein bL35 family.

This is Large ribosomal subunit protein bL35 from Methylococcus capsulatus (strain ATCC 33009 / NCIMB 11132 / Bath).